We begin with the raw amino-acid sequence, 263 residues long: Ribosomal RNA small subunit methyltransferase A (263 aa).

Residues Asn20, Leu22, Gly47, Glu68, Asp90, and Asn111 each coordinate S-adenosyl-L-methionine.

This sequence belongs to the class I-like SAM-binding methyltransferase superfamily. rRNA adenine N(6)-methyltransferase family. RsmA subfamily.

It is found in the cytoplasm. The catalysed reaction is adenosine(1518)/adenosine(1519) in 16S rRNA + 4 S-adenosyl-L-methionine = N(6)-dimethyladenosine(1518)/N(6)-dimethyladenosine(1519) in 16S rRNA + 4 S-adenosyl-L-homocysteine + 4 H(+). Functionally, specifically dimethylates two adjacent adenosines (A1518 and A1519) in the loop of a conserved hairpin near the 3'-end of 16S rRNA in the 30S particle. May play a critical role in biogenesis of 30S subunits. The protein is Ribosomal RNA small subunit methyltransferase A of Chlorobium chlorochromatii (strain CaD3).